We begin with the raw amino-acid sequence, 413 residues long: Metacaspase-1A (413 aa).

Residues 1-104 are disordered; it reads MQNHHHQQSS…PTDPVAFGHG (104 aa). Over residues 36–47 the composition is skewed to pro residues; that stretch reads SPQPGYGAPPPH. Residues 49–58 show a composition bias toward low complexity; it reads GYGQPPSGYG. The segment covering 75-85 has biased composition (polar residues); it reads GMNQYQNTYSH. Residues His204 and Cys260 contribute to the active site.

The protein belongs to the peptidase C14B family.

In terms of biological role, involved in cell death (apoptosis). Required for the apoptotic-like loss of membrane phospholipid asymmetry at stationary phase and facilitates growth under conditions of endoplasmic reticulum stress. The polypeptide is Metacaspase-1A (casA) (Aspergillus fumigatus (strain CBS 144.89 / FGSC A1163 / CEA10) (Neosartorya fumigata)).